The primary structure comprises 364 residues: DNA replication and repair protein RecF (364 aa).

Residue 30–37 (GANGSGKT) coordinates ATP.

The protein belongs to the RecF family.

It is found in the cytoplasm. The RecF protein is involved in DNA metabolism; it is required for DNA replication and normal SOS inducibility. RecF binds preferentially to single-stranded, linear DNA. It also seems to bind ATP. This is DNA replication and repair protein RecF from Sodalis glossinidius (strain morsitans).